The primary structure comprises 190 residues: uncharacterized protein (190 aa).

2 disordered regions span residues 1-21 (MALRGHPEPQPTNTPLSATVG) and 155-190 (PEMGQNESLSEERKGHESKRKSGGRGSPSSHPTQAS). The span at 181-190 (SPSSHPTQAS) shows a compositional bias: low complexity.

This is an uncharacterized protein from Homo sapiens (Human).